The primary structure comprises 440 residues: Protein CyaD (440 aa).

The Cytoplasmic segment spans residues 1–55; sequence MRRALRELAARHGRVLAASWRQRHRRPAGWFDPVETEFLPSALSLQERPISPTAR. Residues 56 to 75 traverse the membrane as a helical segment; the sequence is WLARILMALAAGALVWSVVG. The Periplasmic portion of the chain corresponds to 76 to 440; it reads KTEIVVHAAG…RHAGESLGER (365 aa).

Belongs to the membrane fusion protein (MFP) (TC 8.A.1) family.

Its subcellular location is the cell inner membrane. In terms of biological role, cyaD is necessary for transport of calmodulin-sensitive adenylate cyclase-hemolysin (cyclolysin). The sequence is that of Protein CyaD (cyaD) from Bordetella pertussis (strain ATCC 9797 / DSM 5571 / CCUG 30873 / LMG 14455 / NCTC 10739 / 18323).